The following is a 437-amino-acid chain: UBX domain-containing protein 6 (437 aa).

2 disordered regions span residues 1 to 45 (MNSF…AQGG) and 89 to 109 (ERRQVEDLNISGTSSLQQPDR). The segment covering 7 to 18 (FLNKKRVQNHFK) has biased composition (basic residues). One can recognise a PUB domain in the interval 179-251 (ETAIETICKY…VFTKPSDVHL (73 aa)). The UBX domain occupies 332 to 409 (YRYKYTLIRV…SLAPAALLHV (78 aa)).

As to quaternary structure, interacts with cdc-48.1 (via N-terminus) and cdc-48.2 (via N-terminus). Expressed in the pharynx and some head neurons.

In terms of biological role, probably acts as an adapter for ATPase cdc-48.1 and/or cdc-48.2, conferring substrate specificity. Involved in the lysosomal clearance of cellular material in diet restricted conditions. The sequence is that of UBX domain-containing protein 6 from Caenorhabditis elegans.